The sequence spans 1425 residues: Death-associated protein kinase dapk-1 (1425 aa).

Residues 28–289 form the Protein kinase domain; sequence YEIETELGSG…VEECLQHPWI (262 aa). ATP-binding positions include 34–42 and Lys57; that span reads LGSGQFAVV. Asp155 acts as the Proton acceptor in catalysis. 10 ANK repeats span residues 392–421, 425–454, 458–487, 491–520, 524–553, 557–586, 590–619, 623–652, 810–841, and 934–963; these read NGATAMHCAAKYGHAEVFNYFHMKGGNICA, NGDTPLHVACRFAQHTVAGYVANEKIDVDS, TGETALHCAVESADTRVVRLLLQLRPRLDL, SGDTVLHLAADSINPRIVPLLVCLAPPLHL, REETPLHVAAARGHVDCVQALLDANSPIDA, DGKTALIIALENGNVDIASILITNGCDINH, HGDTALHIASKHGLLQAVQTLCHCAVTVDS, NKKTALHLAAHYGHVDIIRVLLLARADVTL, GGYEPMHTCYDHFVGNADCIHLILYRTSDPTE, and IGMKTLKMELAKCRTNILAKLLKPLAILDT. Positions 695–950 constitute a Roc domain; sequence LDTSLRRIKL…MELAKCRTNI (256 aa). The 82-residue stretch at 1308-1389 folds into the Death domain; it reads ELACLLDPPH…DARDALYRTV (82 aa).

The protein belongs to the protein kinase superfamily. CAMK Ser/Thr protein kinase family. DAP kinase subfamily. Interacts with ptrn-1. Requires Mg(2+) as cofactor. In terms of tissue distribution, expressed in epidermis, muscles and neurons.

It localises to the cytoplasm. The protein localises to the cytosol. It is found in the cytoskeleton. It carries out the reaction L-seryl-[protein] + ATP = O-phospho-L-seryl-[protein] + ADP + H(+). The enzyme catalyses L-threonyl-[protein] + ATP = O-phospho-L-threonyl-[protein] + ADP + H(+). Negative regulator of epidermal barrier repair and innate immune responses to wounding. The role in epidermal tissue integrity and wound healing is established through the inhibition of epidermal microtubule stability, possibly via the negative regulation of the microtubule minus-end binding protein ptrn-1. In epidermis, prevents expression of specific unc-44 isoforms probably by promoting nuclear localization of pinn-1, which in turn may affect sydn-1-ssup-72-mediated regulation of alternative polyadenylation of unc-44 mRNA. Appears to act downstream of or in parallel to muscarinic signaling in the regulation of autophagy. The sequence is that of Death-associated protein kinase dapk-1 from Caenorhabditis elegans.